Consider the following 237-residue polypeptide: Ribosomal RNA small subunit methyltransferase G (237 aa).

Residues glycine 78, phenylalanine 83, 129-130 (AE), and arginine 148 contribute to the S-adenosyl-L-methionine site. The disordered stretch occupies residues 218–237 (KKETPNKYPRKAGMPNKRPL).

It belongs to the methyltransferase superfamily. RNA methyltransferase RsmG family.

The protein localises to the cytoplasm. Functionally, specifically methylates the N7 position of a guanine in 16S rRNA. The protein is Ribosomal RNA small subunit methyltransferase G of Streptococcus gordonii (strain Challis / ATCC 35105 / BCRC 15272 / CH1 / DL1 / V288).